The chain runs to 312 residues: MGRTTSEGIHGFVDDLEPKSSILDKVGDFITVNTKRHDGREDFNEQNDELNSQENHNSSENGNENENEQDSLALDDLDRAFELVEGMDMDWMMPSHAHHSPATTATIKPRLLYSPLIHTQSAVPVTISPNLVATATSTTSANKVTKNKSNSSPYLNKRRGKPGPDSATSLFELPDSVIPTPKPKPKPKQYPKVILPSNSTRRVSPVTAKTSSSAEGVVVASESPVIAPHGSSHSRSLSKRRSSGALVDDDKRESHKHAEQARRNRLAVALHELASLIPAEWKQQNVSAAPSKATTVEAACRYIRHLQQNVST.

Residues M1–T31 form an interaction with PHO80 region. Residues K35 to S71 form a disordered region. Positions E49–G62 are enriched in low complexity. Positions D75 to L83 match the 9aaTAD motif. Positions D75–H99 are transcription activation domain. 4 positions are modified to phosphoserine; by PHO85: S100, S114, S128, and S152. Composition is skewed to polar residues over residues T138–Y154 and P196–T210. The segment at T138 to E259 is disordered. Positions S140 to S166 match the Nuclear localization signal motif. The interval N156–T200 is interaction with PHO80. The interaction with PHO2 stretch occupies residues R201–V218. Residues V203–A227 are involved in oligomerization. S204 is modified (phosphoserine). Low complexity predominate over residues S211 to R235. S223 is modified (phosphoserine; by PHO85). Phosphoserine occurs at positions 242 and 243. Over residues D248–E259 the composition is skewed to basic and acidic residues. A bHLH domain is found at D250–L306.

In terms of assembly, binds DNA as a homodimer. Interacts with transcription factor PHO2 and binds cooperatively to PHO5 UAS. Interacts with the cyclin-CDK PHO80-PHO85 and the CDK inhibitor (CKI) PHO81. Phosphorylated by the cyclin-CDK PHO80-PHO85 at five residues under high-phosphate conditions, preventing PHO4 from activating the structural PHO genes. Phosphorylation of Ser-114 and Ser-128 promotes nuclear export. Phosphorylation of Ser-152 decreases nuclear import. Phosphorylation of Ser-223 decreases the binding affinity for PHO2.

Its subcellular location is the cytoplasm. It is found in the nucleus. Its function is as follows. Transcriptional activator that regulates the expression of repressible phosphatase under phosphate starvation conditions. Binds to the upstream activating sequence (UAS) of several phosphatase encoding PHO genes. Inhibited by the cyclin-CDK PHO80-PHO85 under high-phosphate conditions. This is Phosphate system positive regulatory protein PHO4 (PHO4) from Saccharomyces cerevisiae (strain ATCC 204508 / S288c) (Baker's yeast).